Here is a 93-residue protein sequence, read N- to C-terminus: Sec-independent protein translocase protein TatA (93 aa).

Residues 1–21 form a helical membrane-spanning segment; it reads MGIFDWKHWIVILVVVVLVFG. The segment at 43–93 is disordered; sequence MNDDEKPAEPVVPPAAQPVPPVQPQQSAPLNQPHTIDVQAQKVEEPTRKDS. The segment covering 52–65 has biased composition (pro residues); sequence PVVPPAAQPVPPVQ. The span at 84-93 shows a compositional bias: basic and acidic residues; sequence KVEEPTRKDS.

This sequence belongs to the TatA/E family. In terms of assembly, the Tat system comprises two distinct complexes: a TatABC complex, containing multiple copies of TatA, TatB and TatC subunits, and a separate TatA complex, containing only TatA subunits. Substrates initially bind to the TatABC complex, which probably triggers association of the separate TatA complex to form the active translocon.

Its subcellular location is the cell inner membrane. Functionally, part of the twin-arginine translocation (Tat) system that transports large folded proteins containing a characteristic twin-arginine motif in their signal peptide across membranes. TatA could form the protein-conducting channel of the Tat system. The polypeptide is Sec-independent protein translocase protein TatA (Pseudomonas fluorescens (strain ATCC BAA-477 / NRRL B-23932 / Pf-5)).